We begin with the raw amino-acid sequence, 79 residues long: MORN repeat-containing protein 2 (79 aa).

2 MORN repeats span residues 15 to 36 and 38 to 55; these read YEGQFKDNMFHGLGTYTFPNGA and YTGNFNENRVEGEGEYTD.

The protein localises to the cytoplasmic vesicle. Its subcellular location is the secretory vesicle. It is found in the acrosome. The protein resides in the nucleus. Its function is as follows. Might have a role in spermatogenesis. This chain is MORN repeat-containing protein 2, found in Homo sapiens (Human).